Consider the following 59-residue polypeptide: Small ribosomal subunit protein bS21 (59 aa).

Residues 35 to 59 (REHYEKPSVKKKKKSEAAKRKKRNF) are disordered. Positions 43-59 (VKKKKKSEAAKRKKRNF) are enriched in basic residues.

It belongs to the bacterial ribosomal protein bS21 family.

The polypeptide is Small ribosomal subunit protein bS21 (Finegoldia magna (strain ATCC 29328 / DSM 20472 / WAL 2508) (Peptostreptococcus magnus)).